Reading from the N-terminus, the 351-residue chain is Anthranilate phosphoribosyltransferase (351 aa).

Residues Gly85, 88–89 (GD), Ser93, 95–98 (NIST), 113–121 (KHGNRAASS), and Thr125 each bind 5-phospho-alpha-D-ribose 1-diphosphate. Gly85 contributes to the anthranilate binding site. Ser97 contacts Mg(2+). Asn116 serves as a coordination point for anthranilate. An anthranilate-binding site is contributed by Arg171. The Mg(2+) site is built by Asp229 and Glu230.

Belongs to the anthranilate phosphoribosyltransferase family. In terms of assembly, homodimer. It depends on Mg(2+) as a cofactor.

It carries out the reaction N-(5-phospho-beta-D-ribosyl)anthranilate + diphosphate = 5-phospho-alpha-D-ribose 1-diphosphate + anthranilate. Its pathway is amino-acid biosynthesis; L-tryptophan biosynthesis; L-tryptophan from chorismate: step 2/5. In terms of biological role, catalyzes the transfer of the phosphoribosyl group of 5-phosphorylribose-1-pyrophosphate (PRPP) to anthranilate to yield N-(5'-phosphoribosyl)-anthranilate (PRA). The sequence is that of Anthranilate phosphoribosyltransferase from Saccharopolyspora erythraea (strain ATCC 11635 / DSM 40517 / JCM 4748 / NBRC 13426 / NCIMB 8594 / NRRL 2338).